Here is a 1677-residue protein sequence, read N- to C-terminus: Pentafunctional AROM polypeptide (1677 aa).

The 3-dehydroquinate synthase stretch occupies residues 1-394 (MAVADDTKAD…YEQKASIVED (394 aa)). NAD(+) is bound by residues 50-52 (DDN), 89-92 (ETSK), 120-122 (GGV), and Asp125. Arg136 provides a ligand contact to 7-phospho-2-dehydro-3-deoxy-D-arabino-heptonate. Residue 145–146 (TT) participates in NAD(+) binding. Residues Asp152 and Lys158 each coordinate 7-phospho-2-dehydro-3-deoxy-D-arabino-heptonate. Lys167 is a binding site for NAD(+). Asn168 serves as a coordination point for 7-phospho-2-dehydro-3-deoxy-D-arabino-heptonate. Residues 185–188 (YLET) and Asn196 contribute to the NAD(+) site. Residue Glu200 coordinates Zn(2+). 7-phospho-2-dehydro-3-deoxy-D-arabino-heptonate is bound by residues 200-203 (EVVK) and Lys260. Glu270 acts as the Proton acceptor; for 3-dehydroquinate synthase activity in catalysis. 7-phospho-2-dehydro-3-deoxy-D-arabino-heptonate-binding positions include 274–278 (RNLVN) and His281. His281 serves as a coordination point for Zn(2+). The Proton acceptor; for 3-dehydroquinate synthase activity role is filled by His285. 7-phospho-2-dehydro-3-deoxy-D-arabino-heptonate is bound by residues His297 and Lys366. His297 provides a ligand contact to Zn(2+). Positions 407–858 (VVPSIPTGNV…WDDLENKIGI (452 aa)) are EPSP synthase. Cys840 functions as the For EPSP synthase activity in the catalytic mechanism. The shikimate kinase stretch occupies residues 885-1113 (NSSILLIGMR…GQQRRTYFLC (229 aa)). 892–899 (GMRGTGKT) is a binding site for ATP. Residues 1114–1341 (LTYPDVRHAF…AAPGQLSFKQ (228 aa)) form a 3-dehydroquinase region. The active-site Proton acceptor; for 3-dehydroquinate dehydratase activity is His1243. Catalysis depends on Lys1271, which acts as the Schiff-base intermediate with substrate; for 3-dehydroquinate dehydratase activity. The segment at 1354 to 1677 (SKHFHLFGTP…TRVWEKYGEV (324 aa)) is shikimate dehydrogenase.

It in the N-terminal section; belongs to the sugar phosphate cyclases superfamily. Dehydroquinate synthase family. The protein in the 2nd section; belongs to the EPSP synthase family. This sequence in the 3rd section; belongs to the shikimate kinase family. In the 4th section; belongs to the type-I 3-dehydroquinase family. It in the C-terminal section; belongs to the shikimate dehydrogenase family. Homodimer. It depends on Zn(2+) as a cofactor.

Its subcellular location is the cytoplasm. The catalysed reaction is 7-phospho-2-dehydro-3-deoxy-D-arabino-heptonate = 3-dehydroquinate + phosphate. It carries out the reaction 3-dehydroquinate = 3-dehydroshikimate + H2O. The enzyme catalyses shikimate + NADP(+) = 3-dehydroshikimate + NADPH + H(+). It catalyses the reaction shikimate + ATP = 3-phosphoshikimate + ADP + H(+). The catalysed reaction is 3-phosphoshikimate + phosphoenolpyruvate = 5-O-(1-carboxyvinyl)-3-phosphoshikimate + phosphate. Its pathway is metabolic intermediate biosynthesis; chorismate biosynthesis; chorismate from D-erythrose 4-phosphate and phosphoenolpyruvate: step 2/7. The protein operates within metabolic intermediate biosynthesis; chorismate biosynthesis; chorismate from D-erythrose 4-phosphate and phosphoenolpyruvate: step 3/7. It functions in the pathway metabolic intermediate biosynthesis; chorismate biosynthesis; chorismate from D-erythrose 4-phosphate and phosphoenolpyruvate: step 4/7. It participates in metabolic intermediate biosynthesis; chorismate biosynthesis; chorismate from D-erythrose 4-phosphate and phosphoenolpyruvate: step 5/7. Its pathway is metabolic intermediate biosynthesis; chorismate biosynthesis; chorismate from D-erythrose 4-phosphate and phosphoenolpyruvate: step 6/7. Its function is as follows. The AROM polypeptide catalyzes 5 consecutive enzymatic reactions in prechorismate polyaromatic amino acid biosynthesis. This chain is Pentafunctional AROM polypeptide, found in Coprinopsis cinerea (strain Okayama-7 / 130 / ATCC MYA-4618 / FGSC 9003) (Inky cap fungus).